The chain runs to 104 residues: Large ribosomal subunit protein uL24 (104 aa).

It belongs to the universal ribosomal protein uL24 family. Part of the 50S ribosomal subunit.

One of two assembly initiator proteins, it binds directly to the 5'-end of the 23S rRNA, where it nucleates assembly of the 50S subunit. Functionally, one of the proteins that surrounds the polypeptide exit tunnel on the outside of the subunit. The protein is Large ribosomal subunit protein uL24 of Methylobacterium radiotolerans (strain ATCC 27329 / DSM 1819 / JCM 2831 / NBRC 15690 / NCIMB 10815 / 0-1).